A 148-amino-acid chain; its full sequence is Large-conductance mechanosensitive channel (148 aa).

Helical transmembrane passes span alanine 9–phenylalanine 29 and isoleucine 79–isoleucine 99.

It belongs to the MscL family. Homopentamer.

Its subcellular location is the cell inner membrane. Functionally, channel that opens in response to stretch forces in the membrane lipid bilayer. May participate in the regulation of osmotic pressure changes within the cell. This Pseudomonas syringae pv. tomato (strain ATCC BAA-871 / DC3000) protein is Large-conductance mechanosensitive channel.